The following is a 1150-amino-acid chain: RNA polymerase-associated protein CTR9 (1150 aa).

TPR repeat units follow at residues Val-143 to Asn-176, Val-177 to Thr-210, Ala-212 to Asn-245, Ser-247 to His-282, Ala-320 to Glu-353, Thr-355 to Asn-388, Tyr-432 to Asn-464, Pro-471 to Gln-504, Pro-594 to Asn-627, Phe-643 to Asn-677, Tyr-679 to Phe-711, Tyr-712 to Glu-745, and Ser-748 to Asn-781. Coiled coils occupy residues Ala-848–Leu-916 and Glu-972–Ser-1028. Residues Lys-935 to Asp-1150 form a disordered region. Residues Glu-975–Glu-992 are compositionally biased toward basic residues. 4 stretches are compositionally biased toward basic and acidic residues: residues Arg-993–Asp-1005, Glu-1013–Ser-1024, Asp-1060–Thr-1084, and Arg-1132–Asp-1150.

Component of the PAF1 complex which consists of at least cdc-73, ctr-9, leo-1, pafo-1 and rtfo-1.

It is found in the nucleus. Functionally, component of the PAF1 complex which is a multifunctional complex involved in transcription initiation via genetic interactions with TATA-binding proteins, elongation and transcription-coupled histone modification. Ctr-9 is required for epidermal microtubule organization during morphogenesis. The protein is RNA polymerase-associated protein CTR9 of Caenorhabditis elegans.